The primary structure comprises 990 residues: Serine/threonine-protein kinase ATG1 (990 aa).

The Protein kinase domain occupies 15 to 334; it reads FVIENEIGKG…FDDFFASPVI (320 aa). Residues 21–29 and Lys44 contribute to the ATP site; that span reads IGKGSFAVV. Catalysis depends on Asp165, which acts as the Proton acceptor. The span at 375-408 shows a compositional bias: polar residues; sequence VSSIEASTQQPGVQPPVSTATSPPALESRSTQEA. 5 disordered regions span residues 375 to 499, 529 to 566, 579 to 614, 750 to 784, and 970 to 990; these read VSSI…GGED, SRLGLASRRPSRLSRLSSGPLPSAPGASPPTAPPTILS, ASTGAFALPPGSRPSSFPRRASLSSSGSPSTRQGGQ, LSQELDSSTATSGISPSRNSVQGSARRVGSISSSS, and SPVGVDAEARPGVSRSRTESP. Low complexity-rich tracts occupy residues 529 to 554 and 587 to 613; these read SRLGLASRRPSRLSRLSSGPLPSAPG and PPGSRPSSFPRRASLSSSGSPSTRQGG. A compositionally biased stretch (polar residues) spans 750–771; sequence LSQELDSSTATSGISPSRNSVQ. Over residues 772–784 the composition is skewed to low complexity; it reads GSARRVGSISSSS.

Belongs to the protein kinase superfamily. Ser/Thr protein kinase family. APG1/unc-51/ULK1 subfamily. In terms of assembly, homodimer. Forms a ternary complex with ATG13 and ATG17.

It is found in the cytoplasm. The protein localises to the preautophagosomal structure membrane. It carries out the reaction L-seryl-[protein] + ATP = O-phospho-L-seryl-[protein] + ADP + H(+). The enzyme catalyses L-threonyl-[protein] + ATP = O-phospho-L-threonyl-[protein] + ADP + H(+). Its function is as follows. Serine/threonine protein kinase involved in the cytoplasm to vacuole transport (Cvt) and found to be essential in autophagy, where it is required for the formation of autophagosomes. Involved in the clearance of protein aggregates which cannot be efficiently cleared by the proteasome. Required for selective autophagic degradation of the nucleus (nucleophagy) as well as for mitophagy which contributes to regulate mitochondrial quantity and quality by eliminating the mitochondria to a basal level to fulfill cellular energy requirements and preventing excess ROS production. Also involved in endoplasmic reticulum-specific autophagic process, in selective removal of ER-associated degradation (ERAD) substrates. Plays a key role in ATG9 and ATG23 cycling through the pre-autophagosomal structure and is necessary to promote ATG18 binding to ATG9 through phosphorylation of ATG9. Catalyzes phosphorylation of ATG4, decreasing the interaction between ATG4 and ATG8 and impairing deconjugation of PE-conjugated forms of ATG8. Required for wild-type budding of haploid sporidia and for complete symptom development during pathogenic growth such as gall formation and teliospore production in ears of mature maize. The chain is Serine/threonine-protein kinase ATG1 from Mycosarcoma maydis (Corn smut fungus).